The primary structure comprises 234 residues: Ribonuclease 3 (234 aa).

One can recognise an RNase III domain in the interval arginine 6–glycine 134. Glutamate 47 lines the Mg(2+) pocket. Aspartate 51 is an active-site residue. Positions 120 and 123 each coordinate Mg(2+). Residue glutamate 123 is part of the active site. In terms of domain architecture, DRBM spans aspartate 162–lysine 231.

Belongs to the ribonuclease III family. As to quaternary structure, homodimer. Requires Mg(2+) as cofactor.

It localises to the cytoplasm. The enzyme catalyses Endonucleolytic cleavage to 5'-phosphomonoester.. Its function is as follows. Digests double-stranded RNA. Involved in the processing of primary rRNA transcript to yield the immediate precursors to the large and small rRNAs (23S and 16S). Processes some mRNAs, and tRNAs when they are encoded in the rRNA operon. Processes pre-crRNA and tracrRNA of type II CRISPR loci if present in the organism. This chain is Ribonuclease 3, found in Bdellovibrio bacteriovorus (strain ATCC 15356 / DSM 50701 / NCIMB 9529 / HD100).